The following is a 358-amino-acid chain: Gap junction alpha-5 protein (358 aa).

The Cytoplasmic portion of the chain corresponds to 1–19 (MGDWSFLGEFLEEVHKHST). Residues 20 to 40 (VIGKVWLTVLFIFRMLVLGTA) form a helical membrane-spanning segment. At 41-76 (AESSWGDEQADFQCDTMQPGCGNVCYDQAFPISHIR) the chain is on the extracellular side. A helical transmembrane segment spans residues 77–97 (YWVLQIIFVSTPSLVYMGHAM). Residues 98-164 (HTVRMQEKRK…CSILIRTTME (67 aa)) are Cytoplasmic-facing. Residues 165–185 (VAFIVGQYLLYGIFLDTLHVC) form a helical membrane-spanning segment. The Extracellular segment spans residues 186–205 (RRSPCPHPVNCYVSRPTEKN). The helical transmembrane segment at 206-226 (VFIVFMLAVAALSLFLSLAEL) threads the bilayer. Over 227–358 (YHLGWKKLRQ…SKARSDDLSV (132 aa)) the chain is Cytoplasmic. Residues 318–358 (AQKPEVPNGASPGHRLPHGYQSDKRRLSKASSKARSDDLSV) are disordered. 2 positions are modified to phosphoserine: S353 and S357.

This sequence belongs to the connexin family. Alpha-type (group II) subfamily. As to quaternary structure, a connexon is composed of a hexamer of connexins.

The protein resides in the cell membrane. The protein localises to the cell junction. It localises to the gap junction. In terms of biological role, one gap junction consists of a cluster of closely packed pairs of transmembrane channels, the connexons, through which materials of low MW diffuse from one cell to a neighboring cell. The chain is Gap junction alpha-5 protein (GJA5) from Canis lupus familiaris (Dog).